We begin with the raw amino-acid sequence, 225 residues long: tRNA (guanine-N(7)-)-methyltransferase (225 aa).

4 residues coordinate S-adenosyl-L-methionine: Glu56, Glu81, Asp108, and Asp131. Asp131 is an active-site residue. Residues Lys135, Asp167, and 204–207 (TKFE) contribute to the substrate site.

Belongs to the class I-like SAM-binding methyltransferase superfamily. TrmB family.

It catalyses the reaction guanosine(46) in tRNA + S-adenosyl-L-methionine = N(7)-methylguanosine(46) in tRNA + S-adenosyl-L-homocysteine. The protein operates within tRNA modification; N(7)-methylguanine-tRNA biosynthesis. Its function is as follows. Catalyzes the formation of N(7)-methylguanine at position 46 (m7G46) in tRNA. This Legionella pneumophila (strain Lens) protein is tRNA (guanine-N(7)-)-methyltransferase.